The sequence spans 139 residues: MGKVNKTDREWQRELSPEEYRITRQKGTEPAFTGQYWNTKQHGTYVCRCCGAELFSSDAKYDSGCGWPSFFRPLNGSVIDEHEDLTHGMVRTEIVCHDCEAHLGHVFEDGPQPTGLRYCVNSASLQLKTQEKNDEGTYP.

Residues 8-130 (DREWQRELSP…NSASLQLKTQ (123 aa)) enclose the MsrB domain. Zn(2+) contacts are provided by cysteine 47, cysteine 50, cysteine 96, and cysteine 99. Cysteine 119 acts as the Nucleophile in catalysis.

The protein belongs to the MsrB Met sulfoxide reductase family. The cofactor is Zn(2+).

It carries out the reaction L-methionyl-[protein] + [thioredoxin]-disulfide + H2O = L-methionyl-(R)-S-oxide-[protein] + [thioredoxin]-dithiol. The sequence is that of Peptide methionine sulfoxide reductase MsrB from Acinetobacter baumannii (strain SDF).